A 455-amino-acid polypeptide reads, in one-letter code: MVEDTASVAALYRSYLTPLDIDINIVGTGRDAIESIGRREPDLILLDLRLPDMTGMDVLYAVKEKSPDVPIVFMTAHGSIDTAVEAMRHGAQDFLIKPCEADRLRVTVNNAIRKASKLKNDVDNKNQNYQGFIGSSQTMQAVYRTIDSAASSKASIFITGESGTGKEVCAEAIHAASKRGDKPFIAINCAAIPKDLIESELFGHVKGAFTGAATERQGAAEAADGGTLFLDELCEMDLDLQTKLLRFIQTGTFQKVGSSKMKSVDVRFVCATNRDPWKEVQEGRFREDLYYRLYVIPLHLPPLRARGDDVIEIAYSLLGFMSKEEGKDFVRLSAEVVERFRQYEWPGNVRQLQNVLRNVVVLNEGREITLDMLPPPLNQMSAPINRALPLAHENKVSVHEIFPLWMTEKQAIEQAIEACDGNIPRAATYLDVSPSTIYRKLQTWNEKVKEKEKER.

One can recognise a Response regulatory domain in the interval 1–112 (MVEDTASVAA…RLRVTVNNAI (112 aa)). D47 carries the 4-aspartylphosphate modification. A Sigma-54 factor interaction domain is found at 132–361 (FIGSSQTMQA…LQNVLRNVVV (230 aa)). Residues 160 to 167 (GESGTGKE) and 223 to 232 (ADGGTLFLDE) each bind ATP.

Its function is as follows. Involved in the regulation of different processes depending on the cell density. Acts together with sigma-54 to repress, perhaps indirectly, some genes. This Vibrio cholerae serotype O1 (strain ATCC 39315 / El Tor Inaba N16961) protein is Regulatory protein LuxO (luxO).